A 350-amino-acid polypeptide reads, in one-letter code: Probable V-type proton ATPase subunit d 2 (350 aa).

This sequence belongs to the V-ATPase V0D/AC39 subunit family. V-ATPase is a heteromultimeric enzyme made up of two complexes: the ATP-hydrolytic V1 complex and the proton translocation V0 complex. The V1 complex consists of three catalytic AB heterodimers that form a heterohexamer, three peripheral stalks each consisting of EG heterodimers, one central rotor including subunits D and F, and the regulatory subunits C and H. The proton translocation complex V0 consists of the proton transport subunit a, a ring of proteolipid subunits c9c'', rotary subunit d, subunits e and f, and the accessory subunits VhaAC45 and ATP6AP2.

Subunit of the V0 complex of vacuolar(H+)-ATPase (V-ATPase), a multisubunit enzyme composed of a peripheral complex (V1) that hydrolyzes ATP and a membrane integral complex (V0) that translocates protons. V-ATPase is responsible for acidifying and maintaining the pH of intracellular compartments and in some cell types, is targeted to the plasma membrane, where it is responsible for acidifying the extracellular environment. May play a role in coupling of proton transport and ATP hydrolysis. The chain is Probable V-type proton ATPase subunit d 2 (VhaAC39-2) from Drosophila melanogaster (Fruit fly).